A 244-amino-acid polypeptide reads, in one-letter code: U11/U12 small nuclear ribonucleoprotein 35 kDa protein (244 aa).

Residues 51-129 enclose the RRM domain; that stretch reads LTLFVARLNL…HEIFVDYELE (79 aa). The span at 146-162 shows a compositional bias: basic and acidic residues; it reads GKKESGQLRFGGRDRPF. The segment at 146-244 is disordered; that stretch reads GKKESGQLRF…KSRDKRDRSK (99 aa). Lys-172 is covalently cross-linked (Glycyl lysine isopeptide (Lys-Gly) (interchain with G-Cter in SUMO2)). Composition is skewed to basic and acidic residues over residues 173-185 and 192-244; these read NEPH…ERRE and RHWD…DRSK.

Component of the U11/U12 snRNPs that are part of the U12-type spliceosome.

The protein localises to the nucleus. This Mus musculus (Mouse) protein is U11/U12 small nuclear ribonucleoprotein 35 kDa protein (Snrnp35).